The sequence spans 256 residues: Undecaprenyl-diphosphatase (256 aa).

7 consecutive transmembrane segments (helical) span residues Pro-39 to Val-59, Arg-77 to Phe-97, Phe-101 to Met-121, Ile-135 to Val-155, Leu-176 to Leu-196, Leu-206 to Leu-226, and Val-233 to Pro-253.

Belongs to the UppP family.

Its subcellular location is the cell membrane. The catalysed reaction is di-trans,octa-cis-undecaprenyl diphosphate + H2O = di-trans,octa-cis-undecaprenyl phosphate + phosphate + H(+). In terms of biological role, catalyzes the dephosphorylation of undecaprenyl diphosphate (UPP). This chain is Undecaprenyl-diphosphatase, found in Methanothrix thermoacetophila (strain DSM 6194 / JCM 14653 / NBRC 101360 / PT) (Methanosaeta thermophila).